Here is a 250-residue protein sequence, read N- to C-terminus: 3-deoxy-manno-octulosonate cytidylyltransferase (250 aa).

Belongs to the KdsB family.

Its subcellular location is the cytoplasm. The enzyme catalyses 3-deoxy-alpha-D-manno-oct-2-ulosonate + CTP = CMP-3-deoxy-beta-D-manno-octulosonate + diphosphate. It participates in nucleotide-sugar biosynthesis; CMP-3-deoxy-D-manno-octulosonate biosynthesis; CMP-3-deoxy-D-manno-octulosonate from 3-deoxy-D-manno-octulosonate and CTP: step 1/1. The protein operates within bacterial outer membrane biogenesis; lipopolysaccharide biosynthesis. Activates KDO (a required 8-carbon sugar) for incorporation into bacterial lipopolysaccharide in Gram-negative bacteria. The chain is 3-deoxy-manno-octulosonate cytidylyltransferase from Herminiimonas arsenicoxydans.